The sequence spans 147 residues: Large ribosomal subunit protein uL15 (147 aa).

The disordered stretch occupies residues 1 to 57 (MKLHELKSAPKSRNHKAKVVGRGHGSGLGKTSGRGQKGQKARKSGRTRPGFEGGQTP). Basic residues predominate over residues 10–21 (PKSRNHKAKVVG). Gly residues predominate over residues 22–36 (RGHGSGLGKTSGRGQ). Over residues 37-46 (KGQKARKSGR) the composition is skewed to basic residues.

Belongs to the universal ribosomal protein uL15 family. As to quaternary structure, part of the 50S ribosomal subunit.

Functionally, binds to the 23S rRNA. This Mycoplasmoides gallisepticum (strain R(low / passage 15 / clone 2)) (Mycoplasma gallisepticum) protein is Large ribosomal subunit protein uL15.